The following is a 109-amino-acid chain: Phosphoribosyl-ATP pyrophosphatase (109 aa).

Belongs to the PRA-PH family.

The protein localises to the cytoplasm. The catalysed reaction is 1-(5-phospho-beta-D-ribosyl)-ATP + H2O = 1-(5-phospho-beta-D-ribosyl)-5'-AMP + diphosphate + H(+). It participates in amino-acid biosynthesis; L-histidine biosynthesis; L-histidine from 5-phospho-alpha-D-ribose 1-diphosphate: step 2/9. In Sphingopyxis alaskensis (strain DSM 13593 / LMG 18877 / RB2256) (Sphingomonas alaskensis), this protein is Phosphoribosyl-ATP pyrophosphatase.